A 212-amino-acid polypeptide reads, in one-letter code: Imidazole glycerol phosphate synthase subunit HisH (212 aa).

Residues 3-212 (DVAIIDYGMG…MLANFISWAP (210 aa)) form the Glutamine amidotransferase type-1 domain. The active-site Nucleophile is C82. Residues H192 and E194 contribute to the active site.

In terms of assembly, heterodimer of HisH and HisF.

The protein resides in the cytoplasm. The catalysed reaction is 5-[(5-phospho-1-deoxy-D-ribulos-1-ylimino)methylamino]-1-(5-phospho-beta-D-ribosyl)imidazole-4-carboxamide + L-glutamine = D-erythro-1-(imidazol-4-yl)glycerol 3-phosphate + 5-amino-1-(5-phospho-beta-D-ribosyl)imidazole-4-carboxamide + L-glutamate + H(+). The enzyme catalyses L-glutamine + H2O = L-glutamate + NH4(+). It participates in amino-acid biosynthesis; L-histidine biosynthesis; L-histidine from 5-phospho-alpha-D-ribose 1-diphosphate: step 5/9. Functionally, IGPS catalyzes the conversion of PRFAR and glutamine to IGP, AICAR and glutamate. The HisH subunit catalyzes the hydrolysis of glutamine to glutamate and ammonia as part of the synthesis of IGP and AICAR. The resulting ammonia molecule is channeled to the active site of HisF. The chain is Imidazole glycerol phosphate synthase subunit HisH from Aromatoleum aromaticum (strain DSM 19018 / LMG 30748 / EbN1) (Azoarcus sp. (strain EbN1)).